A 151-amino-acid polypeptide reads, in one-letter code: UPF0756 membrane protein LBA0919 (151 aa).

A run of 4 helical transmembrane segments spans residues 4-24, 52-72, 78-98, and 115-135; these read WLFLALILVVALLGKNMSLII, WGVTIISVAILIPIATGQIGF, TFKTPAGWIAILAGIAVAVLS, and LVLGTIIGVVAFKGVAAGPVI.

It belongs to the UPF0756 family.

Its subcellular location is the cell membrane. This chain is UPF0756 membrane protein LBA0919, found in Lactobacillus acidophilus (strain ATCC 700396 / NCK56 / N2 / NCFM).